Consider the following 144-residue polypeptide: Phosphomevalonate dehydratase small subunit (144 aa).

Residue Ser-65 is the Proton acceptor of the active site.

Belongs to the AcnX type II small subunit family. Heterodimer composed of a large subunit (PMDh-L) and a small subunit (PMDh-S).

It catalyses the reaction (R)-5-phosphomevalonate = (2E)-3-methyl-5-phosphooxypent-2-enoate + H2O. It functions in the pathway isoprenoid biosynthesis; isopentenyl diphosphate biosynthesis via mevalonate pathway. Functionally, component of a hydro-lyase that catalyzes the dehydration of mevalonate 5-phosphate (MVA5P) to form trans-anhydromevalonate 5-phosphate (tAHMP). Involved in the archaeal mevalonate (MVA) pathway, which provides fundamental precursors for isoprenoid biosynthesis, such as isopentenyl diphosphate (IPP) and dimethylallyl diphosphate (DMAPP). In Methanosarcina acetivorans (strain ATCC 35395 / DSM 2834 / JCM 12185 / C2A), this protein is Phosphomevalonate dehydratase small subunit.